A 465-amino-acid chain; its full sequence is Ribulose bisphosphate carboxylase large chain (465 aa).

Lys4 carries the post-translational modification N6,N6,N6-trimethyllysine. Substrate-binding residues include Asn113 and Thr163. Lys165 (proton acceptor) is an active-site residue. Lys167 contributes to the substrate binding site. 3 residues coordinate Mg(2+): Lys191, Asp193, and Glu194. Lys191 carries the N6-carboxylysine modification. His284 (proton acceptor) is an active-site residue. The substrate site is built by Arg285, His317, and Ser369.

This sequence belongs to the RuBisCO large chain family. Type I subfamily. Heterohexadecamer of 8 large chains and 8 small chains; disulfide-linked. The disulfide link is formed within the large subunit homodimers. The cofactor is Mg(2+). The disulfide bond which can form in the large chain dimeric partners within the hexadecamer appears to be associated with oxidative stress and protein turnover.

It localises to the plastid. The protein localises to the chloroplast. It carries out the reaction 2 (2R)-3-phosphoglycerate + 2 H(+) = D-ribulose 1,5-bisphosphate + CO2 + H2O. It catalyses the reaction D-ribulose 1,5-bisphosphate + O2 = 2-phosphoglycolate + (2R)-3-phosphoglycerate + 2 H(+). Functionally, ruBisCO catalyzes two reactions: the carboxylation of D-ribulose 1,5-bisphosphate, the primary event in carbon dioxide fixation, as well as the oxidative fragmentation of the pentose substrate in the photorespiration process. Both reactions occur simultaneously and in competition at the same active site. This Combretum indicum (Rangoon creeper) protein is Ribulose bisphosphate carboxylase large chain.